The sequence spans 83 residues: Cytotoxin A5 (83 aa).

A signal peptide spans 1-21 (MKTLLLTMVVVTIVCLDLGYT). Intrachain disulfides connect Cys24-Cys43, Cys36-Cys61, Cys65-Cys76, and Cys77-Cys82.

Belongs to the three-finger toxin family. Short-chain subfamily. Orphan group XV sub-subfamily. In terms of tissue distribution, expressed by the venom gland.

Its subcellular location is the secreted. It localises to the target cell membrane. Functionally, non-cytotoxic protein that does not show lytic and hemolytic activities, but can induce aggregation and fusion of sphingomyelin vesicles. It binds to integrin alpha-V/beta-3 (ITGAV/ITGB3) with high affinity, and it inhibits osteoclast differentiation and bone resorption in mice, probably due to binding to integrin alpha-V/beta-3. This chain is Cytotoxin A5, found in Naja atra (Chinese cobra).